The primary structure comprises 491 residues: Ketol-acid reductoisomerase (NADP(+)) (491 aa).

The 194-residue stretch at 15-208 folds into the KARI N-terminal Rossmann domain; sequence AQLGKCRFMG…GGHRAGVLES (194 aa). Residues 45–48, arginine 68, arginine 76, serine 78, and 108–110 contribute to the NADP(+) site; these read CGAQ and DKQ. Residue histidine 132 is part of the active site. Position 158 (glycine 158) interacts with NADP(+). KARI C-terminal knotted domains follow at residues 209–344 and 345–484; these read SFVA…TAPQ and FEGK…MTDM. Mg(2+) contacts are provided by aspartate 217, glutamate 221, glutamate 389, and glutamate 393. Substrate is bound at residue serine 414.

Belongs to the ketol-acid reductoisomerase family. The cofactor is Mg(2+).

The enzyme catalyses (2R)-2,3-dihydroxy-3-methylbutanoate + NADP(+) = (2S)-2-acetolactate + NADPH + H(+). The catalysed reaction is (2R,3R)-2,3-dihydroxy-3-methylpentanoate + NADP(+) = (S)-2-ethyl-2-hydroxy-3-oxobutanoate + NADPH + H(+). It functions in the pathway amino-acid biosynthesis; L-isoleucine biosynthesis; L-isoleucine from 2-oxobutanoate: step 2/4. It participates in amino-acid biosynthesis; L-valine biosynthesis; L-valine from pyruvate: step 2/4. Involved in the biosynthesis of branched-chain amino acids (BCAA). Catalyzes an alkyl-migration followed by a ketol-acid reduction of (S)-2-acetolactate (S2AL) to yield (R)-2,3-dihydroxy-isovalerate. In the isomerase reaction, S2AL is rearranged via a Mg-dependent methyl migration to produce 3-hydroxy-3-methyl-2-ketobutyrate (HMKB). In the reductase reaction, this 2-ketoacid undergoes a metal-dependent reduction by NADPH to yield (R)-2,3-dihydroxy-isovalerate. The sequence is that of Ketol-acid reductoisomerase (NADP(+)) from Salmonella schwarzengrund (strain CVM19633).